A 201-amino-acid polypeptide reads, in one-letter code: Protein lin-7 homolog B (201 aa).

The Kinase interacting site motif lies at 1–13 (MAALVEPLGLERE). In terms of domain architecture, L27 spans 10–65 (LEREVSRAVELLERLQRSGELPPQKLQALQRVLQSRFCSAIREVYEQLYDTLDITG). Residues 93–175 (VVELPKTDEG…SVKLVVRYTP (83 aa)) form the PDZ domain.

This sequence belongs to the lin-7 family. As to quaternary structure, forms a complex with CASK and CASKIN1. Component of the brain-specific heterotrimeric complex (LIN-10-LIN-2-LIN-7 complex) composed of at least APBA1, CASK, and LIN7, which associates with the motor protein KIF17 to transport vesicles along microtubules. Forms a heterotrimeric complex composed of MMP5, LIN7B and PATJ; the N-terminal L27 domain of PALS1 interacts with the L27 domain of PATJ and the C-terminal L27 domain of PALS1 interacts with the L27 domain of LIN7B. Forms a heterotrimeric complex with DLG1 and CASK via their L27 domains. Interacts with DLG4 and GRIN2B as well as CDH1 and CTNNB1, the channels KCNJ12/Kir2.2, KCNJ4/Kir2.3 and probably KCNJ2/Kir2.1 and SLC6A12/BGT-1 via its PDZ domain. The association of LIN7A with cadherin and beta-catenin is calcium-dependent, occurs at synaptic junctions and requires the actin cytoskeleton. Interacts with EGFR, ERBB2, ERBB3 and ERBB4 with both PDZ and KID domains. Interacts with ASIC3. Interacts with TOPK. Interacts with RTKN. Associates with KIF17 via APBA1. Interacts with APBA1. Interacts with MPP7. Interacts with DLG2. Interacts with DLG3.

The protein localises to the cell membrane. Its subcellular location is the basolateral cell membrane. The protein resides in the cell junction. It is found in the postsynaptic density membrane. It localises to the tight junction. In terms of biological role, plays a role in establishing and maintaining the asymmetric distribution of channels and receptors at the plasma membrane of polarized cells. Forms membrane-associated multiprotein complexes that may regulate delivery and recycling of proteins to the correct membrane domains. The tripartite complex composed of LIN7 (LIN7A, LIN7B or LIN7C), CASK and APBA1 associates with the motor protein KIF17 to transport vesicles containing N-methyl-D-aspartate (NMDA) receptor subunit NR2B along microtubules. This complex may have the potential to couple synaptic vesicle exocytosis to cell adhesion in brain. Ensures the proper localization of GRIN2B (subunit 2B of the NMDA receptor) to neuronal postsynaptic density and may function in localizing synaptic vesicles at synapses where it is recruited by beta-catenin and cadherin. Required to localize Kir2 channels, GABA transporter (SLC6A12) and EGFR/ERBB1, ERBB2, ERBB3 and ERBB4 to the basolateral membrane of epithelial cells. May increase the amplitude of ASIC3 acid-evoked currents by stabilizing the channel at the cell surface. This is Protein lin-7 homolog B (LIN7B) from Bos taurus (Bovine).